Here is a 214-residue protein sequence, read N- to C-terminus: Protein-L-isoaspartate O-methyltransferase (214 aa).

Serine 63 is a catalytic residue.

It belongs to the methyltransferase superfamily. L-isoaspartyl/D-aspartyl protein methyltransferase family.

The protein resides in the cytoplasm. The enzyme catalyses [protein]-L-isoaspartate + S-adenosyl-L-methionine = [protein]-L-isoaspartate alpha-methyl ester + S-adenosyl-L-homocysteine. Its function is as follows. Catalyzes the methyl esterification of L-isoaspartyl residues in peptides and proteins that result from spontaneous decomposition of normal L-aspartyl and L-asparaginyl residues. It plays a role in the repair and/or degradation of damaged proteins. The protein is Protein-L-isoaspartate O-methyltransferase of Desulfotalea psychrophila (strain LSv54 / DSM 12343).